A 571-amino-acid chain; its full sequence is DExH-box ATP-dependent RNA helicase DExH16, mitochondrial (571 aa).

The N-terminal 56 residues, 1 to 56 (MAYSVVRLRKVSALGISRVLQADKGSLWRFHFEPEFGDLLRLGVLTRNYRKNSGSP), are a transit peptide targeting the mitochondrion. One can recognise a Helicase ATP-binding domain in the interval 83 to 212 (IARKKKRKVI…HLCGDPAVVP (130 aa)). Residue 96-103 (GPTNSGKT) participates in ATP binding. The DEIH box; degenerate signature appears at 176-179 (DEIQ). The Helicase C-terminal domain occupies 213 to 399 (LVEDILKVTG…GLFPTFDLLS (187 aa)).

The protein belongs to the DExH box helicase family. Homodimer; in free form. Component of the mitochondrial degradosome (mtEXO) complex which is a heteropentamer containing 2 copies of SUPV3L1 and 3 copies of PNPT1. Requires Mg(2+) as cofactor. It depends on Mn(2+) as a cofactor. Weakly expressed.

It is found in the nucleus. The protein localises to the mitochondrion matrix. It localises to the mitochondrion nucleoid. It carries out the reaction ATP + H2O = ADP + phosphate + H(+). With respect to regulation, activated by the presence of mitochondrial RNA. Functionally, major helicase player in mitochondrial RNA metabolism. Component of the mitochondrial degradosome (mtEXO) complex, that degrades 3' overhang double-stranded RNA with a 3'-to-5' directionality in an ATP-dependent manner. ATPase and ATP-dependent multisubstrate helicase, able to unwind double-stranded (ds) DNA and RNA, and RNA/DNA heteroduplexes in the 5'-to-3' direction. Plays a role in the RNA surveillance system in mitochondria; regulates the stability of mature mRNAs, the removal of aberrantly formed mRNAs and the rapid degradation of non coding processing intermediates. Required during pollen development. In Arabidopsis thaliana (Mouse-ear cress), this protein is DExH-box ATP-dependent RNA helicase DExH16, mitochondrial.